Reading from the N-terminus, the 249-residue chain is Green-light absorbing proteorhodopsin (249 aa).

Positions 1–17 (MKLLLILGSVIALPTFA) are cleaved as a signal peptide. 7 helical membrane-spanning segments follow: residues 30 to 49 (GVSF…FFFV), 62 to 84 (LTVS…GVWI), 99 to 121 (LLTV…NVAG), 128 to 147 (LVGS…GIMA), 151 to 168 (AFII…ELWA), 189 to 211 (MMYI…YLMG), and 221 to 243 (LIYN…NVAV). The residue at position 231 (Lys-231) is an N6-(retinylidene)lysine.

The protein belongs to the archaeal/bacterial/fungal opsin family. In terms of processing, contains one covalently linked retinal chromophore.

Its subcellular location is the cell membrane. In terms of biological role, light-driven proton pump that generates photothrophic energy. This Gamma-proteobacterium EBAC31A08 protein is Green-light absorbing proteorhodopsin.